We begin with the raw amino-acid sequence, 389 residues long: Chalcone synthase 1 (389 aa).

The active site involves C164.

The protein belongs to the thiolase-like superfamily. Chalcone/stilbene synthases family.

It catalyses the reaction (E)-4-coumaroyl-CoA + 3 malonyl-CoA + 3 H(+) = 2',4,4',6'-tetrahydroxychalcone + 3 CO2 + 4 CoA. Its pathway is secondary metabolite biosynthesis; flavonoid biosynthesis. Its function is as follows. The primary product of this enzyme is 4,2',4',6'-tetrahydroxychalcone (also termed naringenin-chalcone or chalcone) which can under specific conditions spontaneously isomerize into naringenin. The polypeptide is Chalcone synthase 1 (CHS1) (Pisum sativum (Garden pea)).